The chain runs to 338 residues: MASLMLNGAITFPKGLGSPGSNLHARSIPRPTLLSVTRTSTPRLSVATRCSSSSVSSSRPSAQPRFIQHKKEAYWFYRFLSIVYDHVINPGHWTEDMRDDALEPADLSHPDMRVVDVGGGTGFTTLGIVKTVKAKNVTILDQSPHQLAKAKQKEPLKECKIVEGDAEDLPFPTDYADRYVSAGSIEYWPDPQRGIREAYRVLKIGGKACLIGPVYPTFWLSRFFSDVWMLFPKEEEYIEWFKNAGFKDVQLKRIGPKWYRGVRRHGLIMGCSVTGVKPASGDSPLQLGPKEEDVEKPVNNPFSFLGRFLLGTLAAAWFVLIPIYMWIKDQIVPKDQPI.

The transit peptide at 1-51 (MASLMLNGAITFPKGLGSPGSNLHARSIPRPTLLSVTRTSTPRLSVATRCS) directs the protein to the chloroplast. Residues 52–307 (SSSVSSSRPS…VNNPFSFLGR (256 aa)) are Chloroplast intermembrane-facing. Positions 114–123 (VVDVGGGTGF) are SAM motif I. The tract at residues 159 to 172 (CKIVEGDAEDLPFP) is SAM motif II. The interval 200 to 213 (RVLKIGGKACLIGP) is SAM motif III. A helical membrane pass occupies residues 308-328 (FLLGTLAAAWFVLIPIYMWIK). Topologically, residues 329 to 338 (DQIVPKDQPI) are stromal.

Belongs to the class I-like SAM-binding methyltransferase superfamily. MPBQ/MBSQ MT family.

The protein resides in the plastid. It localises to the chloroplast inner membrane. It carries out the reaction 2-methyl-6-phytyl-1,4-benzene-1,4-diol + S-adenosyl-L-methionine = 2,3-dimethyl-6-phytylbenzene-1,4-diol + S-adenosyl-L-homocysteine + H(+). It catalyses the reaction 2-methyl-6-(all-trans-nonaprenyl)benzene-1,4-diol + S-adenosyl-L-methionine = plastoquinol-9 + S-adenosyl-L-homocysteine + H(+). The enzyme catalyses 6-geranylgeranyl-2-methylbenzene-1,4-diol + S-adenosyl-L-methionine = 6-geranylgeranyl-2,3-dimethylbenzene-1,4-diol + S-adenosyl-L-homocysteine + H(+). Its pathway is cofactor biosynthesis; tocopherol biosynthesis. Involved in a key methylation step in both tocopherols (vitamin E) and plastoquinone synthesis. Catalyzes the conversion of 2-methyl-6-phytyl-1,4-hydroquinone (MPBQ) to 2,3-dimethyl-6-phytyl-1,4-hydroquinone (DMPQ, a substrate for tocopherol cyclase), and 2-methyl-6-solanyl-1,4-benzoquinone (MSBQ) to plastoquinone. The protein is 2-methyl-6-phytyl-1,4-hydroquinone methyltransferase, chloroplastic (VTE3) of Arabidopsis thaliana (Mouse-ear cress).